We begin with the raw amino-acid sequence, 910 residues long: von Willebrand factor A domain-containing protein DDB_G0292740 (910 aa).

The region spanning 63-194 (AYQYYNVSSF…SITIHITMIS (132 aa)) is the VIT domain. A disordered region spans residues 297–318 (IKNNPHSDSDSDSDDEENKKEN). Residues 346-515 (EFIFLIDCSG…DMETEVMKLL (170 aa)) form the VWFA domain. Over residues 703-719 (QYQQQQQQQQQNFNSGF) the composition is skewed to low complexity. Residues 703–815 (QYQQQQQQQQ…TQSESTPSND (113 aa)) are disordered. Over residues 720–749 (APPPPPMMSSGPPPPPGSSFGAPPPPPPGG) the composition is skewed to pro residues. The span at 750–802 (AFPTSSISEKKSSSQSSSSYLPPTMSLSRKSSLSPSSPSKNYPSPKLSSPSLS) shows a compositional bias: low complexity. Residues 803 to 815 (YGSTQSESTPSND) show a composition bias toward polar residues.

The protein is von Willebrand factor A domain-containing protein DDB_G0292740 of Dictyostelium discoideum (Social amoeba).